A 169-amino-acid chain; its full sequence is Ribosome maturation factor RimP (169 aa).

The protein belongs to the RimP family.

It is found in the cytoplasm. Functionally, required for maturation of 30S ribosomal subunits. In Streptomyces avermitilis (strain ATCC 31267 / DSM 46492 / JCM 5070 / NBRC 14893 / NCIMB 12804 / NRRL 8165 / MA-4680), this protein is Ribosome maturation factor RimP.